Reading from the N-terminus, the 130-residue chain is Small ribosomal subunit protein uS11c (130 aa).

It belongs to the universal ribosomal protein uS11 family. In terms of assembly, part of the 30S ribosomal subunit.

The protein resides in the plastid. Its subcellular location is the chloroplast. The sequence is that of Small ribosomal subunit protein uS11c from Zygnema circumcarinatum (Green alga).